The sequence spans 349 residues: Single-stranded TG1-3 DNA-binding protein (349 aa).

In terms of domain architecture, RRM 1 spans 45 to 127 (FRVFVGRLST…REIVVQKARP (83 aa)). Disordered regions lie at residues 121-208 (VVQK…PNSI) and 298-349 (EDKQ…AITA). Ser-152 is modified (phosphoserine). Positions 168 to 179 (ANTATAPSSNEA) are enriched in polar residues. Residues 181 to 191 (GVDKKQNEIKG) show a composition bias toward basic and acidic residues. In terms of domain architecture, RRM 2 spans 206–296 (NSIYVSGLSV…LTLVVKSAVF (91 aa)). Composition is skewed to basic and acidic residues over residues 298–310 (EDKQ…KNEN) and 327–340 (TEPK…EEKS).

The protein localises to the cytoplasm. It is found in the nucleus. Its subcellular location is the chromosome. The protein resides in the telomere. Functionally, binds single-stranded telomeric sequences of the type (TG[1-3])n in vitro. Has a role in meiosis. This chain is Single-stranded TG1-3 DNA-binding protein (tcg1), found in Schizosaccharomyces pombe (strain 972 / ATCC 24843) (Fission yeast).